Reading from the N-terminus, the 179-residue chain is Fimbrial subunit ElfA (179 aa).

A signal peptide spans 1–21 (MKKSVLTAFITVVCATSSVMA).

This sequence belongs to the fimbrial protein family.

Its subcellular location is the fimbrium. Part of the elfADCG-ycbUVF fimbrial operon, which promotes adhesion of bacteria to different abiotic surfaces. ElfA is the major fimbrial subunit produced by this operon. In Escherichia coli (strain K12), this protein is Fimbrial subunit ElfA (elfA).